The sequence spans 164 residues: Small ribosomal subunit protein uS5 (164 aa).

An S5 DRBM domain is found at 10-73 (LEERVVAINR…EAAKKNMIEV (64 aa)).

It belongs to the universal ribosomal protein uS5 family. In terms of assembly, part of the 30S ribosomal subunit. Contacts proteins S4 and S8.

Functionally, with S4 and S12 plays an important role in translational accuracy. In terms of biological role, located at the back of the 30S subunit body where it stabilizes the conformation of the head with respect to the body. This chain is Small ribosomal subunit protein uS5, found in Streptococcus pyogenes serotype M1.